A 471-amino-acid polypeptide reads, in one-letter code: Ribosomal protein uS12 methylthiotransferase RimO (471 aa).

The MTTase N-terminal domain maps to 19-134 (PRVGFVSLGC…VMNAVHTHLP (116 aa)). 6 residues coordinate [4Fe-4S] cluster: Cys28, Cys64, Cys93, Cys169, Cys173, and Cys176. In terms of domain architecture, Radical SAM core spans 155–396 (LTPRHYAYLK…MAVAEEVSTA (242 aa)). Residues 399 to 471 (QKRVGQTMQV…QGHDLVGQPV (73 aa)) enclose the TRAM domain.

The protein belongs to the methylthiotransferase family. RimO subfamily. It depends on [4Fe-4S] cluster as a cofactor.

It localises to the cytoplasm. The catalysed reaction is L-aspartate(89)-[ribosomal protein uS12]-hydrogen + (sulfur carrier)-SH + AH2 + 2 S-adenosyl-L-methionine = 3-methylsulfanyl-L-aspartate(89)-[ribosomal protein uS12]-hydrogen + (sulfur carrier)-H + 5'-deoxyadenosine + L-methionine + A + S-adenosyl-L-homocysteine + 2 H(+). Its function is as follows. Catalyzes the methylthiolation of an aspartic acid residue of ribosomal protein uS12. This Delftia acidovorans (strain DSM 14801 / SPH-1) protein is Ribosomal protein uS12 methylthiotransferase RimO.